Reading from the N-terminus, the 375-residue chain is D-alanine--D-alanine ligase (375 aa).

The 204-residue stretch at 145-348 (KRLLRDADLE…YPALITRLIE (204 aa)) folds into the ATP-grasp domain. Position 175–230 (175–230 (ITYLGSSLFVKPANQGSSVGVSKVINRISFDQALALAFCFDDKVLVESAINGRELE)) interacts with ATP. Mg(2+) is bound by residues Asp-302, Glu-315, and Asn-317.

Belongs to the D-alanine--D-alanine ligase family. Mg(2+) is required as a cofactor. It depends on Mn(2+) as a cofactor.

The protein localises to the cytoplasm. It carries out the reaction 2 D-alanine + ATP = D-alanyl-D-alanine + ADP + phosphate + H(+). Its pathway is cell wall biogenesis; peptidoglycan biosynthesis. Cell wall formation. This Baumannia cicadellinicola subsp. Homalodisca coagulata protein is D-alanine--D-alanine ligase.